We begin with the raw amino-acid sequence, 412 residues long: MLNYQQPDASGHFGRYGGSFVAETLIHALDELKAAYARYRDDPEFVAEFKSELAHFVGRPSPIYHAARMSRELGGAQIYLKREDLNHTGAHKINNTIGQALLARRMGKPRVIAETGAGQHGVATATICARYGMECVVYMGSEDVKRQSPNVYRMHLLGARVVPVDSGSKTLKDALNEALRDWVTNVENTFYIIGTVAGPAPYPEMVRDFQSVIGEECLRQMPEMAGRQPDAVIACVGGGSNAMGIFYPYIRHEGVRLIGVEAAGHGLDSGKHAASLSAGSPGVLHGNRTYLLQDANGQIIETHSISAGLDYPGVGPEHAYLKDIGRAEYVGITDDEALQAFHRLCRTEGIIPALESSHAVAYAMKLAPTMRSDQSLLVNLSGRGDKDIGTVADLSGAEFYDRPSSRGEKVKQ.

N6-(pyridoxal phosphate)lysine is present on lysine 92.

This sequence belongs to the TrpB family. In terms of assembly, tetramer of two alpha and two beta chains. Pyridoxal 5'-phosphate is required as a cofactor.

The enzyme catalyses (1S,2R)-1-C-(indol-3-yl)glycerol 3-phosphate + L-serine = D-glyceraldehyde 3-phosphate + L-tryptophan + H2O. It functions in the pathway amino-acid biosynthesis; L-tryptophan biosynthesis; L-tryptophan from chorismate: step 5/5. Functionally, the beta subunit is responsible for the synthesis of L-tryptophan from indole and L-serine. This Methylibium petroleiphilum (strain ATCC BAA-1232 / LMG 22953 / PM1) protein is Tryptophan synthase beta chain.